The following is a 239-amino-acid chain: HTIFQRVYVDGVGEGHLSGIRIPESNWPIMDLSSNAIICNGGVNPYHEPVSLAIIQVPAGSTITAEWHPTIDDVNTTESIRPDHKGPVIAYLAKVPDALQTDVAGLSWFKFYEDGLSDDGTWATDRLIANAGKVNFTIPSCIQPGAYLLRHEIIAVHKAETYPGAQFYLRTLLTIFVFEVETAATPQMECAQLNITGPGSVVPSPTATFPGAYGSTDPGITVDIERLINYTVPGMPAEG.

A Cu(2+)-binding site is contributed by His-1. The cysteines at positions 39 and 190 are disulfide-linked. N-linked (GlcNAc...) asparagine glycosylation is present at Asn-75. His-84 is a binding site for Cu(2+). N-linked (GlcNAc...) asparagine glycosylation is present at Asn-135. O2 contacts are provided by His-157 and Gln-166. Cu(2+) is bound at residue Tyr-168. 2 N-linked (GlcNAc...) asparagine glycosylation sites follow: Asn-194 and Asn-229.

It belongs to the polysaccharide monooxygenase AA9 family. It depends on Cu(2+) as a cofactor.

The protein localises to the secreted. It carries out the reaction [(1-&gt;4)-beta-D-glucosyl]n+m + reduced acceptor + O2 = 4-dehydro-beta-D-glucosyl-[(1-&gt;4)-beta-D-glucosyl]n-1 + [(1-&gt;4)-beta-D-glucosyl]m + acceptor + H2O.. In terms of biological role, lytic polysaccharide monooxygenase (LPMO) that depolymerizes crystalline and amorphous polysaccharides via the oxidation of scissile alpha- or beta-(1-4)-glycosidic bonds, yielding C1 or C4 oxidation products. Catalysis by LPMOs requires the reduction of the active-site copper from Cu(II) to Cu(I) by a reducing agent and H(2)O(2) or O(2) as a cosubstrate. This is AA9 family lytic polysaccharide monooxygenase C from Gloeophyllum trabeum (Brown rot fungus).